The primary structure comprises 163 residues: MNHYVTPDLCDAYPDLVQVLEPMFSNFGGRDSFGGEIVTLKCFEDNSLVKEQADQPGAGKVLVVDGGGSLRRALLGDMIAEKAAKNGWEGLVIYGCIRDVDVIAQTDLGVQALASHPMKTDKRGIGDLNVVVTFAGVTFRPGEYIYADNNGVIVSPSPLKMPE.

Substrate contacts are provided by residues 76-79 (GDMI) and R98. Residue D99 coordinates a divalent metal cation.

Belongs to the class II aldolase/RraA-like family. As to quaternary structure, homotrimer. The cofactor is a divalent metal cation.

It catalyses the reaction 4-hydroxy-4-methyl-2-oxoglutarate = 2 pyruvate. The enzyme catalyses oxaloacetate + H(+) = pyruvate + CO2. In terms of biological role, catalyzes the aldol cleavage of 4-hydroxy-4-methyl-2-oxoglutarate (HMG) into 2 molecules of pyruvate. Also contains a secondary oxaloacetate (OAA) decarboxylase activity due to the common pyruvate enolate transition state formed following C-C bond cleavage in the retro-aldol and decarboxylation reactions. The protein is Putative 4-hydroxy-4-methyl-2-oxoglutarate aldolase of Pseudomonas fluorescens (strain SBW25).